A 107-amino-acid polypeptide reads, in one-letter code: Magnetosome protein MmsF (107 aa).

The Cytoplasmic segment spans residues 1–13; the sequence is MTEAILRSTLGAR. The chain crosses the membrane as a helical span at residues 14-34; that stretch reads TTVMAALSYLSVLCFVPLLVD. Over 35–46 the chain is Lumenal; the sequence is RDDEFVYFHAKQ. The chain crosses the membrane as a helical span at residues 47–67; sequence GLVIWMWGVLALFALHVPVLG. The Cytoplasmic segment spans residues 68–69; sequence KW. The chain crosses the membrane as a helical span at residues 70–90; it reads IFGFSSMGVLVFSLLGLVSVV. Over 91–107 the chain is Lumenal; that stretch reads FQRAWKLPLISWVAHRI.

This sequence belongs to the magnetosome MamF/MmsF protein family. May oligomerize.

The protein resides in the magnetosome membrane. Its activity is regulated as follows. Its function may be negatively regulated by one of the MamGFDC proteins. In terms of biological role, plays a major role in synthesis of cubooctahedral magnetite crystals by controlling crystal growth and morphology after nucleation. Has a partially redundant function with MamF. When overexpressed in E.coli the soluble protein self assembles into shells of about 36 nm. This protein mediates the formation of magnetite nanoparticles from a solution of Fe(2+) and Fe(3+) sulfate; the crystals are larger and lack alternative iron oxide/oxyhydroxide species seen in the protein's absence. This is Magnetosome protein MmsF from Paramagnetospirillum magneticum (strain ATCC 700264 / AMB-1) (Magnetospirillum magneticum).